The sequence spans 599 residues: Putative ATP-dependent helicase YeeB (599 aa).

The Helicase ATP-binding domain occupies 30 to 207; that stretch reads AFEKRNSQYL…LLPEDEELFD (178 aa). 43-50 provides a ligand contact to ATP; that stretch reads APPASGKS. The DEAH box motif lies at 154–157; the sequence is DEFH. In terms of domain architecture, Helicase C-terminal spans 236-408; that stretch reads QYTSAINEVL…TVNTMLKAIS (173 aa).

Belongs to the helicase family.

The polypeptide is Putative ATP-dependent helicase YeeB (yeeB) (Bacillus subtilis (strain 168)).